A 397-amino-acid chain; its full sequence is Tryptophan synthase beta chain (397 aa).

Position 87 is an N6-(pyridoxal phosphate)lysine (Lys-87).

Belongs to the TrpB family. In terms of assembly, tetramer of two alpha and two beta chains. Pyridoxal 5'-phosphate is required as a cofactor.

It carries out the reaction (1S,2R)-1-C-(indol-3-yl)glycerol 3-phosphate + L-serine = D-glyceraldehyde 3-phosphate + L-tryptophan + H2O. The protein operates within amino-acid biosynthesis; L-tryptophan biosynthesis; L-tryptophan from chorismate: step 5/5. In terms of biological role, the beta subunit is responsible for the synthesis of L-tryptophan from indole and L-serine. This Enterobacter sp. (strain 638) protein is Tryptophan synthase beta chain.